We begin with the raw amino-acid sequence, 167 residues long: 6,7-dimethyl-8-ribityllumazine synthase (167 aa).

5-amino-6-(D-ribitylamino)uracil is bound by residues Phe-26, 60–62 (AFE), and 89–91 (AII). 94–95 (ET) contacts (2S)-2-hydroxy-3-oxobutyl phosphate. His-97 functions as the Proton donor in the catalytic mechanism. Position 122 (Phe-122) interacts with 5-amino-6-(D-ribitylamino)uracil. Arg-136 is a binding site for (2S)-2-hydroxy-3-oxobutyl phosphate.

This sequence belongs to the DMRL synthase family. In terms of assembly, forms an icosahedral capsid composed of 60 subunits, arranged as a dodecamer of pentamers.

It catalyses the reaction (2S)-2-hydroxy-3-oxobutyl phosphate + 5-amino-6-(D-ribitylamino)uracil = 6,7-dimethyl-8-(1-D-ribityl)lumazine + phosphate + 2 H2O + H(+). It participates in cofactor biosynthesis; riboflavin biosynthesis; riboflavin from 2-hydroxy-3-oxobutyl phosphate and 5-amino-6-(D-ribitylamino)uracil: step 1/2. Its function is as follows. Catalyzes the formation of 6,7-dimethyl-8-ribityllumazine by condensation of 5-amino-6-(D-ribitylamino)uracil with 3,4-dihydroxy-2-butanone 4-phosphate. This is the penultimate step in the biosynthesis of riboflavin. This chain is 6,7-dimethyl-8-ribityllumazine synthase, found in Ruthia magnifica subsp. Calyptogena magnifica.